We begin with the raw amino-acid sequence, 121 residues long: MSLFDLKRAERRRRRVRLKLRSLSSIRLSVFKSNRHFYAQLIDDEAGRTVAAASTLESEVLAVASRRVNAGAVKIVAKLLAERISGLDAAYRKFVFDRGSYRYMGVVAAFADELRSLGFEF.

Belongs to the universal ribosomal protein uL18 family. In terms of assembly, part of the 50S ribosomal subunit; part of the 5S rRNA/L5/L18/L25 subcomplex. Contacts the 5S and 23S rRNAs.

Functionally, this is one of the proteins that bind and probably mediate the attachment of the 5S RNA into the large ribosomal subunit, where it forms part of the central protuberance. In Anaplasma phagocytophilum (strain HZ), this protein is Large ribosomal subunit protein uL18.